The sequence spans 174 residues: Transmembrane protein 208 (174 aa).

3 helical membrane passes run 30 to 50 (NMAI…FEVT), 54 to 74 (VFMH…MAFM), and 111 to 131 (GTLL…LAPI). The disordered stretch occupies residues 151 to 174 (AQDDNPQVDEKKQKKMDRRMRRMR). Basic residues predominate over residues 163–174 (QKKMDRRMRRMR).

It belongs to the TMEM208 family. Interacts with fz. In terms of tissue distribution, expressed in the brain.

It is found in the endoplasmic reticulum membrane. May play an important role during development and helps to maintain proper levels of Fz. This is Transmembrane protein 208 from Drosophila melanogaster (Fruit fly).